The primary structure comprises 124 residues: Fluoride-specific ion channel FluC (124 aa).

4 consecutive transmembrane segments (helical) span residues 4 to 24 (LLLV…ISIF), 35 to 55 (FGTL…YALG), 60 to 80 (ISPE…TTFS), and 102 to 122 (VVLN…LVFS). Na(+)-binding residues include glycine 74 and threonine 77.

It belongs to the fluoride channel Fluc/FEX (TC 1.A.43) family.

It localises to the cell inner membrane. The enzyme catalyses fluoride(in) = fluoride(out). Its activity is regulated as follows. Na(+) is not transported, but it plays an essential structural role and its presence is essential for fluoride channel function. Functionally, fluoride-specific ion channel. Important for reducing fluoride concentration in the cell, thus reducing its toxicity. The chain is Fluoride-specific ion channel FluC from Shewanella baltica (strain OS185).